A 127-amino-acid polypeptide reads, in one-letter code: MYPHLTGLGIHDPKQIERYSLRQEAHKDVLKIYFHKQKGEFFAKSVKFKYPRQVKSVLVDSGSHKYKEVTEINRNLTLVIDELNKITKPAKTTEVDVKEKILSDLRHLEKVVSSKIAEIEADLEKLK.

It belongs to the UPF0325 family.

The chain is UPF0325 protein VIBHAR_03240 from Vibrio campbellii (strain ATCC BAA-1116).